The following is an 851-amino-acid chain: DNA mismatch repair protein MutS (851 aa).

ATP is bound at residue 602-609 (GPNMSGKS).

The protein belongs to the DNA mismatch repair MutS family.

In terms of biological role, this protein is involved in the repair of mismatches in DNA. It is possible that it carries out the mismatch recognition step. This protein has a weak ATPase activity. The chain is DNA mismatch repair protein MutS from Streptococcus pyogenes serotype M6 (strain ATCC BAA-946 / MGAS10394).